The following is a 1390-amino-acid chain: DNA-directed RNA polymerase subunit beta'' (1390 aa).

Zn(2+) is bound by residues Cys224, Cys294, Cys301, and Cys304.

The protein belongs to the RNA polymerase beta' chain family. RpoC2 subfamily. In plastids the minimal PEP RNA polymerase catalytic core is composed of four subunits: alpha, beta, beta', and beta''. When a (nuclear-encoded) sigma factor is associated with the core the holoenzyme is formed, which can initiate transcription. The cofactor is Zn(2+).

It localises to the plastid. The protein resides in the chloroplast. It catalyses the reaction RNA(n) + a ribonucleoside 5'-triphosphate = RNA(n+1) + diphosphate. Its function is as follows. DNA-dependent RNA polymerase catalyzes the transcription of DNA into RNA using the four ribonucleoside triphosphates as substrates. This is DNA-directed RNA polymerase subunit beta'' from Ceratophyllum demersum (Rigid hornwort).